The chain runs to 374 residues: Guanine nucleotide-binding protein subunit alpha-15 (374 aa).

The 334-residue stretch at 41–374 folds into the G-alpha domain; it reads GELKLLLLGP…ARYLDEINLL (334 aa). A G1 motif region spans residues 44–57; that stretch reads KLLLLGPGESGKST. GTP is bound by residues 49–56, 183–189, 208–212, 277–280, and Ala346; these read GPGESGKS, LRSRMPT, DAGGQ, and NKTD. Mg(2+)-binding residues include Ser56 and Thr189. Positions 181 to 189 are G2 motif; it reads DVLRSRMPT. The interval 204 to 213 is G3 motif; that stretch reads LRIVDAGGQK. The interval 273 to 280 is G4 motif; the sequence is ILFLNKTD. The segment at 344-349 is G5 motif; sequence TCATDT.

Belongs to the G-alpha family. G(q) subfamily. In terms of assembly, g proteins are composed of 3 units; alpha, beta and gamma. The alpha chain contains the guanine nucleotide binding site.

Its function is as follows. Guanine nucleotide-binding proteins (G proteins) are involved as modulators or transducers in various transmembrane signaling systems. The sequence is that of Guanine nucleotide-binding protein subunit alpha-15 (Gna15) from Rattus norvegicus (Rat).